We begin with the raw amino-acid sequence, 434 residues long: Serine--tRNA ligase (434 aa).

239-241 (TAE) serves as a coordination point for L-serine. An ATP-binding site is contributed by 270–272 (RSE). Glu-293 is a binding site for L-serine. 357-360 (EISS) contacts ATP. Ser-393 lines the L-serine pocket.

This sequence belongs to the class-II aminoacyl-tRNA synthetase family. Type-1 seryl-tRNA synthetase subfamily. Homodimer. The tRNA molecule binds across the dimer.

The protein localises to the cytoplasm. It carries out the reaction tRNA(Ser) + L-serine + ATP = L-seryl-tRNA(Ser) + AMP + diphosphate + H(+). The enzyme catalyses tRNA(Sec) + L-serine + ATP = L-seryl-tRNA(Sec) + AMP + diphosphate + H(+). Its pathway is aminoacyl-tRNA biosynthesis; selenocysteinyl-tRNA(Sec) biosynthesis; L-seryl-tRNA(Sec) from L-serine and tRNA(Sec): step 1/1. In terms of biological role, catalyzes the attachment of serine to tRNA(Ser). Is also able to aminoacylate tRNA(Sec) with serine, to form the misacylated tRNA L-seryl-tRNA(Sec), which will be further converted into selenocysteinyl-tRNA(Sec). This chain is Serine--tRNA ligase, found in Pseudoalteromonas translucida (strain TAC 125).